The primary structure comprises 209 residues: Large ribosomal subunit protein uL3 (209 aa).

The tract at residues 127–164 (NFSGGQRTHGQSDRLRAPGSVGGASDPSRTFKGTKMGG) is disordered.

This sequence belongs to the universal ribosomal protein uL3 family. Part of the 50S ribosomal subunit. Forms a cluster with proteins L14 and L19.

In terms of biological role, one of the primary rRNA binding proteins, it binds directly near the 3'-end of the 23S rRNA, where it nucleates assembly of the 50S subunit. In Chlorobium phaeobacteroides (strain BS1), this protein is Large ribosomal subunit protein uL3.